Consider the following 336-residue polypeptide: Potassium channel subfamily K member 1 (336 aa).

The Cytoplasmic segment spans residues 1 to 20 (MLQSLAGSSCVRLVERHRSA). Residues 21–41 (WCFGFLVLGYLLYLVFGAVVF) form a helical membrane-spanning segment. The Extracellular segment spans residues 42-103 (SSVELPYEDL…SNASGNWNWD (62 aa)). Asn95 carries N-linked (GlcNAc...) asparagine glycosylation. The segment at residues 104–116 (FTSALFFASTVLS) is an intramembrane region (helical). Residues 117–122 (TTGYGH) lie within the membrane without spanning it. The interval 117–122 (TTGYGH) is selectivity filter 1. At 123 to 132 (TVPLSDGGKA) the chain is on the extracellular side. Residues 133-156 (FCIIYSVIGIPFTLLFLTAVVQRI) form a helical membrane-spanning segment. Residues 157–181 (TVHVTRRPVLYFHIRWGFSKQVVAI) lie on the Cytoplasmic side of the membrane. The chain crosses the membrane as a helical span at residues 182–202 (VHAVLLGFVTVSCFFFIPAAV). Residues 203–211 (FSVLEDDWN) are Extracellular-facing. The segment at residues 212–224 (FLESFYFCFISLS) is an intramembrane region (helical). The segment at 225–230 (TIGLGD) is selectivity filter 2. An intramembrane segment occupies 225–231 (TIGLGDY). At 232–243 (VPGEGYNQKFRE) the chain is on the extracellular side. The helical transmembrane segment at 244 to 267 (LYKIGITCYLLLGLIAMLVVLETF) threads the bilayer. Residues 268-336 (CELHELKKFR…SACVDGPANH (69 aa)) lie on the Cytoplasmic side of the membrane. Lys274 is covalently cross-linked (Glycyl lysine isopeptide (Lys-Gly) (interchain with G-Cter in SUMO)). The tract at residues 293–299 (IIEHDQL) is important for intracellular retention in recycling endosomes. Ser326 bears the Phosphoserine mark.

Belongs to the two pore domain potassium channel (TC 1.A.1.8) family. Homodimer; disulfide-linked. Heterodimer with KCNK2; disulfide-linked. In astrocytes, forms mostly heterodimeric potassium channels with KCNK2, with only a minor proportion of functional channels containing homodimeric KCNK1. Interacts with KCNK3 and KCNK9, forming functional heterodimeric channels. Interacts with GNG4. Identified in a complex with PSD and ARF6; interacts only with PSD that is bound to ARF6. Interacts with UBE2I. Sumoylation is controversial. Sumoylated by UBE2I. Not sumoylated when expressed in xenopus oocytes or mammalian cells. Sumoylation inactivates the channel, but does not interfere with expression at the cell membrane. Sumoylation of a single subunit is sufficient to silence the dimeric channel. Sumoylation of KCNK1 is sufficient to silence heterodimeric channels formed by KCNK1 and KCNK3 or KCNK9. Desumoylated by SENP1; this activates the channel. Desumoylated by SENP1; this strongly increases halothane-mediated activation of heterodimeric channels formed with KCNK9. SENP1 treatment has no effect. As to expression, detected in bronchial epithelial cells. Detected in heart left atrium and left ventricle. Detected in cardiac myocytes (at protein level). Widely expressed with high levels in heart, brain and kidney, and lower levels in colon, ovary, placenta, lung and liver. Highly expressed in cerebellum, and detected at lower levels in amygdala, caudate nucleus, brain cortex, hippocampus, putamen, substantia nigra, thalamus, dorsal root ganglion, spinal cord, pituitary, heart, kidney, lung, placenta, pancreas, stomach, small intestine, uterus and prostate. Detected in right and left heart ventricle and atrium, and in heart Purkinje fibers.

The protein localises to the cell membrane. The protein resides in the recycling endosome. It localises to the synaptic cell membrane. It is found in the cytoplasmic vesicle. Its subcellular location is the perikaryon. The protein localises to the cell projection. The protein resides in the dendrite. It localises to the apical cell membrane. The enzyme catalyses K(+)(in) = K(+)(out). It carries out the reaction NH4(+)(in) = NH4(+)(out). The catalysed reaction is Na(+)(in) = Na(+)(out). It catalyses the reaction Rb(+)(in) = Rb(+)(out). The enzyme catalyses Cs(+)(in) = Cs(+)(out). It carries out the reaction Li(+)(in) = Li(+)(out). The catalysed reaction is L-glutamate(out) = L-glutamate(in). It catalyses the reaction chloride(in) = chloride(out). With respect to regulation, inhibited by Ba(2+) ions and quinidine. Inhibited by quinine. Is slightly inhibited by 10 mM tetraethylammonium (TEA), and only marginally inhibited by 4-aminopyridine, charybdotoxin and dendrotoxin. Lowering the extracellular pH to below 6.5 transiently activates the channel, and then inhibits channel activity. Inhibited when the intracellular pH is decreased down to pH 6.0, but this may be due to indirect effects. In terms of biological role, ion channel that contributes to passive transmembrane potassium transport and to the regulation of the resting membrane potential in brain astrocytes, but also in kidney and in other tissues. Forms dimeric channels through which potassium ions pass in accordance with their electrochemical gradient. The channel is selective for K(+) ions at physiological potassium concentrations and at neutral pH, but becomes permeable to Na(+) at subphysiological K(+) levels and upon acidification of the extracellular medium. The homodimer has very low potassium channel activity, when expressed in heterologous systems, and can function as weakly inward rectifying potassium channel. Channel activity is modulated by activation of serotonin receptors. Heterodimeric channels containing KCNK1 and KCNK2 have much higher activity, and may represent the predominant form in astrocytes. Heterodimeric channels containing KCNK1 and KCNK3 or KCNK9 have much higher activity. Heterodimeric channels formed by KCNK1 and KCNK9 may contribute to halothane-sensitive currents. Mediates outward rectifying potassium currents in dentate gyrus granule cells and contributes to the regulation of their resting membrane potential. Contributes to the regulation of action potential firing in dentate gyrus granule cells and down-regulates their intrinsic excitability. In astrocytes, the heterodimer formed by KCNK1 and KCNK2 is required for rapid glutamate release in response to activation of G-protein coupled receptors, such as F2R and CNR1. Required for normal ion and water transport in the kidney. Contributes to the regulation of the resting membrane potential of pancreatic beta cells. The low channel activity of homodimeric KCNK1 may be due to sumoylation. The low channel activity may be due to rapid internalization from the cell membrane and retention in recycling endosomes. Permeable to monovalent cations with ion selectivity for K(+) &gt; Rb(+) &gt;&gt; NH4(+) &gt;&gt; Cs(+) = Na(+) = Li(+). The sequence is that of Potassium channel subfamily K member 1 (KCNK1) from Homo sapiens (Human).